Reading from the N-terminus, the 416-residue chain is Tyrosine--tRNA ligase (416 aa).

Position 39 (Y39) interacts with L-tyrosine. The 'HIGH' region signature appears at 44-53 (CTASSLHVGS). L-tyrosine is bound by residues Y176 and Q180. Residues 236 to 240 (KMGKT) carry the 'KMSKS' region motif. Residue K239 participates in ATP binding. An S4 RNA-binding domain is found at 349–415 (ISLIDLLHDI…GKKRHIKVMV (67 aa)).

Belongs to the class-I aminoacyl-tRNA synthetase family. TyrS type 1 subfamily. Homodimer.

It localises to the cytoplasm. The enzyme catalyses tRNA(Tyr) + L-tyrosine + ATP = L-tyrosyl-tRNA(Tyr) + AMP + diphosphate + H(+). In terms of biological role, catalyzes the attachment of tyrosine to tRNA(Tyr) in a two-step reaction: tyrosine is first activated by ATP to form Tyr-AMP and then transferred to the acceptor end of tRNA(Tyr). The protein is Tyrosine--tRNA ligase of Wolbachia sp. subsp. Brugia malayi (strain TRS).